A 381-amino-acid polypeptide reads, in one-letter code: NAD-dependent methanol dehydrogenase (381 aa).

The protein belongs to the iron-containing alcohol dehydrogenase family. In terms of assembly, homodecamer. Requires Mg(2+) as cofactor. Zn(2+) serves as cofactor.

Its subcellular location is the cytoplasm. It carries out the reaction methanol + NAD(+) = formaldehyde + NADH + H(+). The protein operates within one-carbon metabolism; methanol degradation; formaldehyde from methanol: step 1/1. Stimulated by the activator protein Act which requires the presence of magnesium ions. Inhibited by 1,10-phenanthroline. Its function is as follows. Catalyzes the oxidation of methanol to yield formaldehyde. It possesses a NADH-dependent formaldehyde reductase activity and cannot use NADP. This Bacillus methanolicus protein is NAD-dependent methanol dehydrogenase.